The chain runs to 77 residues: uncharacterized protein (77 aa).

Functionally, putative sugar-binding regulatory protein for the alpha-amylase gene. This is an uncharacterized protein from Streptomyces violaceus (Streptomyces venezuelae).